The sequence spans 474 residues: Trehalose-6-phosphate synthase (474 aa).

Arg-10 contacts D-glucose 6-phosphate. 22–23 serves as a coordination point for UDP-alpha-D-glucose; it reads GG. Residues Tyr-77 and Asp-131 each coordinate D-glucose 6-phosphate. 2 residues coordinate UDP-alpha-D-glucose: Arg-263 and Lys-268. Arg-301 provides a ligand contact to D-glucose 6-phosphate. UDP-alpha-D-glucose contacts are provided by residues Phe-340 and 366-370; that span reads LVAKE.

Belongs to the glycosyltransferase 20 family. In terms of assembly, homotetramer.

It carries out the reaction D-glucose 6-phosphate + UDP-alpha-D-glucose = alpha,alpha-trehalose 6-phosphate + UDP + H(+). It participates in glycan biosynthesis; trehalose biosynthesis. Functionally, probably involved in the osmoprotection via the biosynthesis of trehalose. Catalyzes the transfer of glucose from UDP-alpha-D-glucose (UDP-Glc) to D-glucose 6-phosphate (Glc-6-P) to form trehalose-6-phosphate. Acts with retention of the anomeric configuration of the UDP-sugar donor. This chain is Trehalose-6-phosphate synthase, found in Shigella dysenteriae serotype 1 (strain Sd197).